A 149-amino-acid chain; its full sequence is Large ribosomal subunit protein uL30 (149 aa).

It belongs to the universal ribosomal protein uL30 family. As to quaternary structure, part of the 50S ribosomal subunit.

The sequence is that of Large ribosomal subunit protein uL30 from Methanopyrus kandleri (strain AV19 / DSM 6324 / JCM 9639 / NBRC 100938).